The chain runs to 185 residues: p53 apoptosis effector related to PMP-22 (185 aa).

4 helical membrane-spanning segments follow: residues 13 to 33 (WILP…IAAQ), 74 to 94 (VAAL…ISLV), 105 to 125 (LPFI…ALII), and 143 to 163 (WAYG…ILFC).

It belongs to the TMEM47 family.

The protein localises to the cell junction. It is found in the desmosome. The protein resides in the cell membrane. Its subcellular location is the cytoplasm. Component of intercellular desmosome junctions. Positively regulates apoptosis in the early-stage embryo in response to UV irradiation, this is partially dependent on tp53 activation. Required for the survival of cell populations in the developing notochord and skin, therefore required for normal embryogenesis beyond 30 hpf. Acts as a positive regulator of endothelial cell apoptosis in response to blood flow-derived shear stress. The chain is p53 apoptosis effector related to PMP-22 from Danio rerio (Zebrafish).